Consider the following 332-residue polypeptide: 3-ketodihydrosphingosine reductase (332 aa).

The signal sequence occupies residues 1–25 (MLLLAAASLVAFVLLLYMVSPLISP). Over 26-269 (KPLALPGAHV…QGNFNSSIGS (244 aa)) the chain is Cytoplasmic. The NADPH site is built by G39, S41, S42, G43, R64, K68, and D93. Residues 39-43 (GGSSG) carry the GXSXG motif. The active-site Proton donor is the S172. Y186 (proton acceptor) is an active-site residue. Residues Y186 and K190 each contribute to the NADP(+) site. The active-site Lowers pKa of active site Tyr is the K190. Residues 270-290 (DGYMLSSLTCGMAPVTSIMEG) traverse the membrane as a helical segment. The Lumenal portion of the chain corresponds to 291-292 (LQ). A helical membrane pass occupies residues 293–313 (QVVTMGLFRTIALFYLGSFDS). Over 314 to 331 (IVRRCMMQKAKLETVDKT) the chain is Cytoplasmic.

Belongs to the short-chain dehydrogenases/reductases (SDR) family.

The protein localises to the endoplasmic reticulum membrane. It catalyses the reaction sphinganine + NADP(+) = 3-oxosphinganine + NADPH + H(+). It functions in the pathway lipid metabolism; sphingolipid metabolism. Functionally, catalyzes the reduction of 3'-oxosphinganine (3-ketodihydrosphingosine/KDS) to sphinganine (dihydrosphingosine/DHS), the second step of de novo sphingolipid biosynthesis. The protein is 3-ketodihydrosphingosine reductase (KDSR) of Bos taurus (Bovine).